The following is a 381-amino-acid chain: tRNA-specific 2-thiouridylase MnmA (381 aa).

ATP contacts are provided by residues 26–33 and leucine 52; that span reads AMSGGVDS. Catalysis depends on cysteine 120, which acts as the Nucleophile. Cysteines 120 and 217 form a disulfide. Residue glycine 144 participates in ATP binding. The interval 166–168 is interaction with tRNA; it reads RDQ. Cysteine 217 (cysteine persulfide intermediate) is an active-site residue.

It belongs to the MnmA/TRMU family.

Its subcellular location is the cytoplasm. It carries out the reaction S-sulfanyl-L-cysteinyl-[protein] + uridine(34) in tRNA + AH2 + ATP = 2-thiouridine(34) in tRNA + L-cysteinyl-[protein] + A + AMP + diphosphate + H(+). Catalyzes the 2-thiolation of uridine at the wobble position (U34) of tRNA, leading to the formation of s(2)U34. The protein is tRNA-specific 2-thiouridylase MnmA of Ruegeria sp. (strain TM1040) (Silicibacter sp.).